A 138-amino-acid chain; its full sequence is Large ribosomal subunit protein bL19 (138 aa).

It belongs to the bacterial ribosomal protein bL19 family.

Functionally, this protein is located at the 30S-50S ribosomal subunit interface and may play a role in the structure and function of the aminoacyl-tRNA binding site. This Rickettsia rickettsii (strain Iowa) protein is Large ribosomal subunit protein bL19.